The primary structure comprises 137 residues: Large ribosomal subunit protein uL16 (137 aa).

This sequence belongs to the universal ribosomal protein uL16 family. Part of the 50S ribosomal subunit.

Its function is as follows. Binds 23S rRNA and is also seen to make contacts with the A and possibly P site tRNAs. This chain is Large ribosomal subunit protein uL16, found in Xanthomonas campestris pv. campestris (strain 8004).